A 137-amino-acid polypeptide reads, in one-letter code: Interferon-induced transmembrane protein 3 (137 aa).

Residues 1-57 (MNHTSQAFVNAATGGQPPNYERIKEEYEVSELGAPHGSASVRTTVINMPREVSVPDH) lie on the Cytoplasmic side of the membrane. Tyr20 is subject to Phosphotyrosine. A Glycyl lysine isopeptide (Lys-Gly) (interchain with G-Cter in ubiquitin) cross-link involves residue Lys24. A Phosphotyrosine modification is found at Tyr27. The segment at residues 58–78 (VVWSLFNTLFMNFCCLGFIAY) is an intramembrane region (helical). Positions 60-93 (WSLFNTLFMNFCCLGFIAYAYSVKSRDRKMVGDM) are interaction with SPP1. S-palmitoyl cysteine attachment occurs at residues Cys71 and Cys72. The Cytoplasmic segment spans residues 79–109 (AYSVKSRDRKMVGDMTGAQAYASTAKCLNIS). Glycyl lysine isopeptide (Lys-Gly) (interchain with G-Cter in ubiquitin) cross-links involve residues Lys83, Lys88, and Lys104. Residue Cys105 is the site of S-palmitoyl cysteine attachment. The interval 108 to 133 (ISSLVLSILMVIITIVTVVIIALNAP) is interaction with VAPA. A helical membrane pass occupies residues 110–130 (SLVLSILMVIITIVTVVIIAL). Topologically, residues 131-137 (NAPRLQT) are extracellular.

Belongs to the CD225/Dispanin family. As to quaternary structure, interacts with ATP6V0B. Interacts with CD81. Interacts with SPP1; the interaction reduces OPN expression. Interacts with BRI3. Polyubiquitinated with both 'Lys-48' and 'Lys-63' linkages. Ubiquitination negatively regulates antiviral activity. Lys-24 is the most prevalent ubiquitination site. Post-translationally, phosphorylation at Tyr-20 is required for endosomal and lysosomal location.

Its subcellular location is the cell membrane. It is found in the late endosome membrane. It localises to the early endosome membrane. The protein resides in the lysosome membrane. The protein localises to the cytoplasm. Its subcellular location is the perinuclear region. In terms of biological role, IFN-induced antiviral protein which disrupts intracellular cholesterol homeostasis. Inhibits the entry of viruses to the host cell cytoplasm by preventing viral fusion with cholesterol depleted endosomes. May inactivate new enveloped viruses which buds out of the infected cell, by letting them go out with a cholesterol depleted membrane. Active against multiple viruses. Plays a critical role in the structural stability and function of vacuolar ATPase (v-ATPase). Establishes physical contact with the v-ATPase of endosomes which is critical for proper clathrin localization and is also required for the function of the v-ATPase to lower the pH in phagocytic endosomes thus establishing an antiviral state. This is Interferon-induced transmembrane protein 3 from Rattus norvegicus (Rat).